Here is a 1238-residue protein sequence, read N- to C-terminus: DNA-directed RNA polymerase subunit beta (1238 aa).

Residues 1187 to 1238 are disordered; sequence EGREDTPPEEVYEESYEEGFEEEIEELPEDIDFEPDSFDIENDDLDLEDFDI. Residues 1193 to 1238 are compositionally biased toward acidic residues; the sequence is PPEEVYEESYEEGFEEEIEELPEDIDFEPDSFDIENDDLDLEDFDI.

The protein belongs to the RNA polymerase beta chain family. As to quaternary structure, the RNAP catalytic core consists of 2 alpha, 1 beta, 1 beta' and 1 omega subunit. When a sigma factor is associated with the core the holoenzyme is formed, which can initiate transcription.

It carries out the reaction RNA(n) + a ribonucleoside 5'-triphosphate = RNA(n+1) + diphosphate. DNA-dependent RNA polymerase catalyzes the transcription of DNA into RNA using the four ribonucleoside triphosphates as substrates. The chain is DNA-directed RNA polymerase subunit beta from Thermoanaerobacter pseudethanolicus (strain ATCC 33223 / 39E) (Clostridium thermohydrosulfuricum).